A 398-amino-acid chain; its full sequence is Argininosuccinate synthase (398 aa).

ATP is bound by residues 9–17 (AYSGGVDTS) and Ala-37. Tyr-88 contacts L-citrulline. Residue Gly-118 participates in ATP binding. Residues Thr-120, Asn-124, and Asp-125 each coordinate L-aspartate. Residue Asn-124 participates in L-citrulline binding. L-citrulline contacts are provided by Arg-128, Ser-176, Ser-185, Glu-261, and Tyr-273.

It belongs to the argininosuccinate synthase family. Type 1 subfamily. Homotetramer.

Its subcellular location is the cytoplasm. The enzyme catalyses L-citrulline + L-aspartate + ATP = 2-(N(omega)-L-arginino)succinate + AMP + diphosphate + H(+). Its pathway is amino-acid biosynthesis; L-arginine biosynthesis; L-arginine from L-ornithine and carbamoyl phosphate: step 2/3. The polypeptide is Argininosuccinate synthase (Gloeobacter violaceus (strain ATCC 29082 / PCC 7421)).